The primary structure comprises 657 residues: Protein translocase subunit SecA 2 (657 aa).

ATP is bound by residues glutamine 93, 111 to 115, and aspartate 531; that span reads GEGKT.

It belongs to the SecA family. As to quaternary structure, monomer and homodimer. Part of the essential Sec protein translocation apparatus which comprises SecA, SecYEG and auxiliary proteins SecDF. Other proteins may also be involved.

Its subcellular location is the cell inner membrane. The protein localises to the cytoplasm. It carries out the reaction ATP + H2O + cellular proteinSide 1 = ADP + phosphate + cellular proteinSide 2.. Part of the Sec protein translocase complex. Interacts with the SecYEG preprotein conducting channel. Has a central role in coupling the hydrolysis of ATP to the transfer of proteins into and across the cell membrane, serving as an ATP-driven molecular motor driving the stepwise translocation of polypeptide chains across the membrane. This Rhodopirellula baltica (strain DSM 10527 / NCIMB 13988 / SH1) protein is Protein translocase subunit SecA 2.